Here is a 309-residue protein sequence, read N- to C-terminus: Protein FdhE (309 aa).

The protein belongs to the FdhE family.

The protein resides in the cytoplasm. Functionally, necessary for formate dehydrogenase activity. This chain is Protein FdhE, found in Escherichia coli O9:H4 (strain HS).